The primary structure comprises 626 residues: Phosphomethylpyrimidine synthase (626 aa).

Residues 92 to 106 (AREVKPEDNGLKGPD) show a composition bias toward basic and acidic residues. The interval 92 to 117 (AREVKPEDNGLKGPDRSAGVPPFPNV) is disordered. Residues N219, M248, Y277, H313, 333-335 (SRG), 374-377 (DGLR), and E413 contribute to the substrate site. H417 contributes to the Zn(2+) binding site. Substrate is bound at residue Y440. H481 provides a ligand contact to Zn(2+). 3 residues coordinate [4Fe-4S] cluster: C561, C564, and C569.

The protein belongs to the ThiC family. In terms of assembly, homodimer. Requires [4Fe-4S] cluster as cofactor.

The catalysed reaction is 5-amino-1-(5-phospho-beta-D-ribosyl)imidazole + S-adenosyl-L-methionine = 4-amino-2-methyl-5-(phosphooxymethyl)pyrimidine + CO + 5'-deoxyadenosine + formate + L-methionine + 3 H(+). It functions in the pathway cofactor biosynthesis; thiamine diphosphate biosynthesis. Functionally, catalyzes the synthesis of the hydroxymethylpyrimidine phosphate (HMP-P) moiety of thiamine from aminoimidazole ribotide (AIR) in a radical S-adenosyl-L-methionine (SAM)-dependent reaction. The protein is Phosphomethylpyrimidine synthase of Novosphingobium aromaticivorans (strain ATCC 700278 / DSM 12444 / CCUG 56034 / CIP 105152 / NBRC 16084 / F199).